Here is a 363-residue protein sequence, read N- to C-terminus: Caffeic acid 3-O-methyltransferase (363 aa).

130–136 (MNQDKVL) is a substrate binding site. The segment at 162 to 180 (AFEYHGKDPRFNKVFNQGM) is substrate binding. Residues glycine 208, aspartate 231, aspartate 251, methionine 252, and lysine 265 each contribute to the S-adenosyl-L-methionine site. The active-site Proton acceptor is histidine 269.

This sequence belongs to the class I-like SAM-binding methyltransferase superfamily. Cation-independent O-methyltransferase family. COMT subfamily. Homodimer.

The enzyme catalyses (E)-caffeate + S-adenosyl-L-methionine = (E)-ferulate + S-adenosyl-L-homocysteine + H(+). It participates in aromatic compound metabolism; phenylpropanoid biosynthesis. Functionally, catalyzes the conversion of caffeic acid to ferulic acid and of 5-hydroxyferulic acid to sinapic acid. The resulting products may subsequently be converted to the corresponding alcohols that are incorporated into lignins. The protein is Caffeic acid 3-O-methyltransferase (COMT1) of Catharanthus roseus (Madagascar periwinkle).